The sequence spans 246 residues: Pyridoxine 5'-phosphate synthase (246 aa).

Residue Asn-9 participates in 3-amino-2-oxopropyl phosphate binding. 11 to 12 (DH) contributes to the 1-deoxy-D-xylulose 5-phosphate binding site. Arg-20 lines the 3-amino-2-oxopropyl phosphate pocket. The Proton acceptor role is filled by His-45. The 1-deoxy-D-xylulose 5-phosphate site is built by Arg-47 and His-52. Glu-72 acts as the Proton acceptor in catalysis. A 1-deoxy-D-xylulose 5-phosphate-binding site is contributed by Thr-102. The active-site Proton donor is the His-193. 3-amino-2-oxopropyl phosphate-binding positions include Gly-194 and 215–216 (GH).

Belongs to the PNP synthase family. Homooctamer; tetramer of dimers.

It localises to the cytoplasm. The enzyme catalyses 3-amino-2-oxopropyl phosphate + 1-deoxy-D-xylulose 5-phosphate = pyridoxine 5'-phosphate + phosphate + 2 H2O + H(+). It participates in cofactor biosynthesis; pyridoxine 5'-phosphate biosynthesis; pyridoxine 5'-phosphate from D-erythrose 4-phosphate: step 5/5. Its function is as follows. Catalyzes the complicated ring closure reaction between the two acyclic compounds 1-deoxy-D-xylulose-5-phosphate (DXP) and 3-amino-2-oxopropyl phosphate (1-amino-acetone-3-phosphate or AAP) to form pyridoxine 5'-phosphate (PNP) and inorganic phosphate. The sequence is that of Pyridoxine 5'-phosphate synthase from Colwellia psychrerythraea (strain 34H / ATCC BAA-681) (Vibrio psychroerythus).